The sequence spans 163 residues: Probable ribosome biogenesis protein RLP24 (163 aa).

Belongs to the eukaryotic ribosomal protein eL24 family. Associated with nucleolar and cytoplasmic pre-60S particles. At the end of biogenesis it dissociates from cytoplasmic pre-60S particles and is likely to be exchanged for its ribosomal homolog, RPL24.

The protein resides in the nucleus. It is found in the nucleolus. In terms of biological role, involved in the biogenesis of the 60S ribosomal subunit. Ensures the docking of GTPBP4/NOG1 to pre-60S particles. The chain is Probable ribosome biogenesis protein RLP24 (Rsl24d1) from Mus musculus (Mouse).